We begin with the raw amino-acid sequence, 184 residues long: ATP synthase subunit b, chloroplastic (184 aa).

A helical membrane pass occupies residues 26 to 48 (ILATNLINLSVVLGVLIFFGKGV).

This sequence belongs to the ATPase B chain family. As to quaternary structure, F-type ATPases have 2 components, F(1) - the catalytic core - and F(0) - the membrane proton channel. F(1) has five subunits: alpha(3), beta(3), gamma(1), delta(1), epsilon(1). F(0) has four main subunits: a(1), b(1), b'(1) and c(10-14). The alpha and beta chains form an alternating ring which encloses part of the gamma chain. F(1) is attached to F(0) by a central stalk formed by the gamma and epsilon chains, while a peripheral stalk is formed by the delta, b and b' chains.

Its subcellular location is the plastid. It localises to the chloroplast thylakoid membrane. F(1)F(0) ATP synthase produces ATP from ADP in the presence of a proton or sodium gradient. F-type ATPases consist of two structural domains, F(1) containing the extramembraneous catalytic core and F(0) containing the membrane proton channel, linked together by a central stalk and a peripheral stalk. During catalysis, ATP synthesis in the catalytic domain of F(1) is coupled via a rotary mechanism of the central stalk subunits to proton translocation. Functionally, component of the F(0) channel, it forms part of the peripheral stalk, linking F(1) to F(0). The protein is ATP synthase subunit b, chloroplastic of Acorus calamus (Sweet flag).